The chain runs to 336 residues: tRNA N6-adenosine threonylcarbamoyltransferase (336 aa).

Residues histidine 114 and histidine 118 each contribute to the Fe cation site. Residues 136–140, aspartate 169, glycine 182, aspartate 186, and asparagine 275 contribute to the substrate site; that span reads LVSGG. Residue aspartate 301 coordinates Fe cation.

This sequence belongs to the KAE1 / TsaD family. It depends on Fe(2+) as a cofactor.

It is found in the cytoplasm. The enzyme catalyses L-threonylcarbamoyladenylate + adenosine(37) in tRNA = N(6)-L-threonylcarbamoyladenosine(37) in tRNA + AMP + H(+). Its function is as follows. Required for the formation of a threonylcarbamoyl group on adenosine at position 37 (t(6)A37) in tRNAs that read codons beginning with adenine. Is involved in the transfer of the threonylcarbamoyl moiety of threonylcarbamoyl-AMP (TC-AMP) to the N6 group of A37, together with TsaE and TsaB. TsaD likely plays a direct catalytic role in this reaction. This chain is tRNA N6-adenosine threonylcarbamoyltransferase, found in Streptococcus gordonii (strain Challis / ATCC 35105 / BCRC 15272 / CH1 / DL1 / V288).